Here is a 156-residue protein sequence, read N- to C-terminus: MPRKGYIAKREILPDPIYKNRVLTKFINQIMLDGKKGTAESICYNAFELIQEKTGKDPIEVFETALKNVMPVLEVKARRVGGANYQVPIEVRADRRQTLGLRWLVGYARKRSEKTMEERIAGELMDAANNTGGSIKKKEDTHKMAEANKAFAHYRW.

It belongs to the universal ribosomal protein uS7 family. As to quaternary structure, part of the 30S ribosomal subunit. Contacts proteins S9 and S11.

Its function is as follows. One of the primary rRNA binding proteins, it binds directly to 16S rRNA where it nucleates assembly of the head domain of the 30S subunit. Is located at the subunit interface close to the decoding center, probably blocks exit of the E-site tRNA. The sequence is that of Small ribosomal subunit protein uS7 from Desulfitobacterium hafniense (strain Y51).